Consider the following 241-residue polypeptide: Aspartate/glutamate leucyltransferase (241 aa).

This sequence belongs to the R-transferase family. Bpt subfamily.

Its subcellular location is the cytoplasm. It catalyses the reaction N-terminal L-glutamyl-[protein] + L-leucyl-tRNA(Leu) = N-terminal L-leucyl-L-glutamyl-[protein] + tRNA(Leu) + H(+). The catalysed reaction is N-terminal L-aspartyl-[protein] + L-leucyl-tRNA(Leu) = N-terminal L-leucyl-L-aspartyl-[protein] + tRNA(Leu) + H(+). Functionally, functions in the N-end rule pathway of protein degradation where it conjugates Leu from its aminoacyl-tRNA to the N-termini of proteins containing an N-terminal aspartate or glutamate. In Helicobacter hepaticus (strain ATCC 51449 / 3B1), this protein is Aspartate/glutamate leucyltransferase.